The chain runs to 238 residues: Probable metal transport system ATP-binding protein TP_0035 (238 aa).

One can recognise an ABC transporter domain in the interval 10–231; that stretch reads VLLQNVSFRY…LDMQKKDALA (222 aa). Position 44-51 (44-51) interacts with ATP; sequence GENGSGKS.

Belongs to the ABC transporter superfamily.

Its subcellular location is the cell inner membrane. Part of an ATP-driven transport system TP_0034/TP_0035/TP_0036 for a metal. Probably responsible for energy coupling to the transport system. This chain is Probable metal transport system ATP-binding protein TP_0035, found in Treponema pallidum (strain Nichols).